A 214-amino-acid chain; its full sequence is Ribonuclease HII (214 aa).

The RNase H type-2 domain occupies 26-214 (EIVCGVDEAG…PVRAALDLIR (189 aa)). A divalent metal cation-binding residues include Asp32, Glu33, and Asp124.

This sequence belongs to the RNase HII family. It depends on Mn(2+) as a cofactor. Mg(2+) serves as cofactor.

Its subcellular location is the cytoplasm. It catalyses the reaction Endonucleolytic cleavage to 5'-phosphomonoester.. In terms of biological role, endonuclease that specifically degrades the RNA of RNA-DNA hybrids. In Burkholderia orbicola (strain MC0-3), this protein is Ribonuclease HII.